The primary structure comprises 317 residues: Tenomodulin (317 aa).

Residues 1–30 (MAKNPPENCEGCHILNAEALKSKKICKSLK) lie on the Cytoplasmic side of the membrane. A helical; Signal-anchor for type II membrane protein membrane pass occupies residues 31-50 (ICGLVFGILALTLIVLFWGS). At 51-317 (KHFWPEVSKK…WWVARMLGRV (267 aa)) the chain is on the extracellular side. A BRICHOS domain is found at 93 to 186 (GNGTDETLEV…ICDNVTMYWI (94 aa)). Residue Asn-94 is glycosylated (N-linked (GlcNAc...) asparagine). Cys-120 and Cys-178 are oxidised to a cystine. An N-linked (GlcNAc...) asparagine glycan is attached at Asn-180. Ser-239 is subject to Phosphoserine.

Belongs to the chondromodulin-1 family. In terms of tissue distribution, widely expressed with highest expression in tendons and ligaments, in the diaphragm, eye and skeletal muscle. Expressed in neuronal cells of all brain regions. Very low expression, if any, in glial cells.

It is found in the membrane. The protein localises to the nucleus envelope. May be an angiogenesis inhibitor. This chain is Tenomodulin (Tnmd), found in Mus musculus (Mouse).